Here is a 277-residue protein sequence, read N- to C-terminus: Large ribosomal subunit protein uL2 (277 aa).

Positions 222–277 (GVAMNPVDHPHGGGEGRTSGGRHPVTPWGKPTKGKKTRSNKATDKFIMRSRHQRKK) are disordered.

It belongs to the universal ribosomal protein uL2 family. Part of the 50S ribosomal subunit. Forms a bridge to the 30S subunit in the 70S ribosome.

One of the primary rRNA binding proteins. Required for association of the 30S and 50S subunits to form the 70S ribosome, for tRNA binding and peptide bond formation. It has been suggested to have peptidyltransferase activity; this is somewhat controversial. Makes several contacts with the 16S rRNA in the 70S ribosome. The polypeptide is Large ribosomal subunit protein uL2 (Brucella canis (strain ATCC 23365 / NCTC 10854 / RM-666)).